Consider the following 301-residue polypeptide: 33 kDa chaperonin (301 aa).

2 disulfides stabilise this stretch: Cys-239–Cys-241 and Cys-272–Cys-275.

This sequence belongs to the HSP33 family. Under oxidizing conditions two disulfide bonds are formed involving the reactive cysteines. Under reducing conditions zinc is bound to the reactive cysteines and the protein is inactive.

Its subcellular location is the cytoplasm. Its function is as follows. Redox regulated molecular chaperone. Protects both thermally unfolding and oxidatively damaged proteins from irreversible aggregation. Plays an important role in the bacterial defense system toward oxidative stress. The polypeptide is 33 kDa chaperonin (Nostoc punctiforme (strain ATCC 29133 / PCC 73102)).